The chain runs to 156 residues: Cyanate hydratase (156 aa).

Catalysis depends on residues arginine 96, glutamate 99, and serine 122.

Belongs to the cyanase family.

The enzyme catalyses cyanate + hydrogencarbonate + 3 H(+) = NH4(+) + 2 CO2. Catalyzes the reaction of cyanate with bicarbonate to produce ammonia and carbon dioxide. This Burkholderia mallei (strain NCTC 10247) protein is Cyanate hydratase.